A 257-amino-acid chain; its full sequence is MPLAKRIIPCLDVDNGRVVKGVKFLDIRDAGDPVEIAKRYNQEGADEITFLDITATHEGRDTTVHTVEKIASEVFIPLTVGGGIRTVDDIRTMLNAGADKVSINSAAVFNPDFVKAASDRFGAQCIVVAIDAKKVSAEGEMPRWEIFTHGGRKPTGIDAVEWAVKMAGYGAGEILLTSMDGDGTKKGYDLGVTRAISDAVPIPVIASGGVGNLQHLVDGVTLGRADAVLAASIFHFREYTLPQAKEFMRAQGIEVRL.

Residues aspartate 12 and aspartate 131 contribute to the active site.

This sequence belongs to the HisA/HisF family. As to quaternary structure, heterodimer of HisH and HisF.

The protein resides in the cytoplasm. It catalyses the reaction 5-[(5-phospho-1-deoxy-D-ribulos-1-ylimino)methylamino]-1-(5-phospho-beta-D-ribosyl)imidazole-4-carboxamide + L-glutamine = D-erythro-1-(imidazol-4-yl)glycerol 3-phosphate + 5-amino-1-(5-phospho-beta-D-ribosyl)imidazole-4-carboxamide + L-glutamate + H(+). The protein operates within amino-acid biosynthesis; L-histidine biosynthesis; L-histidine from 5-phospho-alpha-D-ribose 1-diphosphate: step 5/9. Functionally, IGPS catalyzes the conversion of PRFAR and glutamine to IGP, AICAR and glutamate. The HisF subunit catalyzes the cyclization activity that produces IGP and AICAR from PRFAR using the ammonia provided by the HisH subunit. This Cellvibrio japonicus (strain Ueda107) (Pseudomonas fluorescens subsp. cellulosa) protein is Imidazole glycerol phosphate synthase subunit HisF.